Here is a 355-residue protein sequence, read N- to C-terminus: NADH dehydrogenase [ubiquinone] 1 alpha subcomplex subunit 10, mitochondrial (355 aa).

The transit peptide at 1–35 (MALRLLKLGATSASVRVVAAGAQRVRGIHSSVQCK) directs the protein to the mitochondrion. Serine 250 is modified (phosphoserine; by PINK1). N6-succinyllysine is present on lysine 285.

The protein belongs to the complex I NDUFA10 subunit family. As to quaternary structure, complex I is composed of 45 different subunits. This a component of the hydrophobic protein fraction. Requires FAD as cofactor. Phosphorylation at Ser-250 by PINK1 is required for the binding and/or reduction of the complex I substrate ubiquinone.

It is found in the mitochondrion matrix. Its function is as follows. Accessory subunit of the mitochondrial membrane respiratory chain NADH dehydrogenase (Complex I), that is believed not to be involved in catalysis. Complex I functions in the transfer of electrons from NADH to the respiratory chain. The immediate electron acceptor for the enzyme is believed to be ubiquinone. This Pongo pygmaeus (Bornean orangutan) protein is NADH dehydrogenase [ubiquinone] 1 alpha subcomplex subunit 10, mitochondrial (NDUFA10).